A 168-amino-acid chain; its full sequence is Ribosome rescue factor SmrB (168 aa).

The Smr domain maps to 92–167 (LDLHGLTKEQ…GDAAILILFE (76 aa)).

The protein belongs to the SmrB family. Associates with collided ribosomes, but not with correctly translating polysomes.

Its function is as follows. Acts as a ribosome collision sensor. Detects stalled/collided disomes (pairs of ribosomes where the leading ribosome is stalled and a second ribosome has collided with it) and endonucleolytically cleaves mRNA at the 5' boundary of the stalled ribosome. Stalled/collided disomes form a new interface (primarily via the 30S subunits) that binds SmrB. Cleaved mRNA becomes available for tmRNA ligation, leading to ribosomal subunit dissociation and rescue of stalled ribosomes. The polypeptide is Ribosome rescue factor SmrB (Pasteurella multocida (strain Pm70)).